The primary structure comprises 146 residues: Ribosome-binding factor A (146 aa).

The disordered stretch occupies residues 125–146 (RDLDADDDKTKDDRAKDDKDSE).

Belongs to the RbfA family. Monomer. Binds 30S ribosomal subunits, but not 50S ribosomal subunits or 70S ribosomes.

It is found in the cytoplasm. Functionally, one of several proteins that assist in the late maturation steps of the functional core of the 30S ribosomal subunit. Associates with free 30S ribosomal subunits (but not with 30S subunits that are part of 70S ribosomes or polysomes). Required for efficient processing of 16S rRNA. May interact with the 5'-terminal helix region of 16S rRNA. The sequence is that of Ribosome-binding factor A from Mesorhizobium japonicum (strain LMG 29417 / CECT 9101 / MAFF 303099) (Mesorhizobium loti (strain MAFF 303099)).